The chain runs to 484 residues: UDP-N-acetylmuramoyl-L-alanyl-D-glutamate--2,6-diaminopimelate ligase (484 aa).

S30 lines the UDP-N-acetyl-alpha-D-muramoyl-L-alanyl-D-glutamate pocket. 111–117 (GTNGKTT) contacts ATP. UDP-N-acetyl-alpha-D-muramoyl-L-alanyl-D-glutamate contacts are provided by residues 153–154 (TT), S180, Q186, and R188. Residue K220 is modified to N6-carboxylysine. Meso-2,6-diaminopimelate is bound by residues R378, 402–405 (DNPR), G455, and E459. The Meso-diaminopimelate recognition motif motif lies at 402–405 (DNPR).

It belongs to the MurCDEF family. MurE subfamily. Requires Mg(2+) as cofactor. Carboxylation is probably crucial for Mg(2+) binding and, consequently, for the gamma-phosphate positioning of ATP.

It localises to the cytoplasm. It catalyses the reaction UDP-N-acetyl-alpha-D-muramoyl-L-alanyl-D-glutamate + meso-2,6-diaminopimelate + ATP = UDP-N-acetyl-alpha-D-muramoyl-L-alanyl-gamma-D-glutamyl-meso-2,6-diaminopimelate + ADP + phosphate + H(+). Its pathway is cell wall biogenesis; peptidoglycan biosynthesis. In terms of biological role, catalyzes the addition of meso-diaminopimelic acid to the nucleotide precursor UDP-N-acetylmuramoyl-L-alanyl-D-glutamate (UMAG) in the biosynthesis of bacterial cell-wall peptidoglycan. This is UDP-N-acetylmuramoyl-L-alanyl-D-glutamate--2,6-diaminopimelate ligase from Phocaeicola vulgatus (strain ATCC 8482 / DSM 1447 / JCM 5826 / CCUG 4940 / NBRC 14291 / NCTC 11154) (Bacteroides vulgatus).